Here is a 477-residue protein sequence, read N- to C-terminus: M-phase inducer phosphatase 3 (477 aa).

The tract at residues 1–20 is disordered; the sequence is MSAEFFSSKREEGSLASGPS. At Ser2 the chain carries N-acetylserine. Residues Ser20 and Ser38 each carry the phosphoserine modification. The residue at position 48 (Thr48) is a Phosphothreonine; by CDK1. Ser58, Ser62, and Ser65 each carry phosphoserine. Thr68 is subject to Phosphothreonine; by CDK1. Position 123 is a phosphoserine; by CDK1 (Ser123). A Phosphoserine modification is found at Ser130. Thr131 bears the Phosphothreonine mark. Residue Ser169 is modified to Phosphoserine; by CDK1. 2 positions are modified to phosphoserine; by PLK3: Ser192 and Ser199. Ser218 is modified (phosphoserine; by CDK1). Ser220 is modified (phosphoserine; by CHEK1, CHEK2, BRSK1, MAPK14 AND MARK3). The region spanning 325-432 is the Rhodanese domain; that stretch reads LIEKFYIIDC…FFPEYMELCE (108 aa). Residue Cys381 is part of the active site. Ser476 is modified (phosphoserine).

Belongs to the MPI phosphatase family. In terms of assembly, interacts with MAPK14 and 14-3-3 proteins. When phosphorylated on Ser-130 and/or Thr-131, interacts with PLK1. Interacts with MARK3/C-TAK1. Phosphorylated by CHEK1 and MAPK14 at Ser-220. This phosphorylation creates a binding site for 14-3-3 protein and inhibits the phosphatase. Phosphorylated by PLK4. Phosphorylated by PLK1, leading to activate the phosphatase activity. Phosphorylation by PLK3 at Ser-192 promotes nuclear translocation. Ser-199 is a minor phosphorylation site. Phosphorylation by CDK1 occurs at G2 and G2-M transition and leads to increased activity.

The protein localises to the nucleus. It carries out the reaction O-phospho-L-tyrosyl-[protein] + H2O = L-tyrosyl-[protein] + phosphate. Functions as a dosage-dependent inducer in mitotic control. Tyrosine protein phosphatase required for progression of the cell cycle. When phosphorylated, highly effective in activating G2 cells into prophase. Directly dephosphorylates CDK1 and activates its kinase activity. This chain is M-phase inducer phosphatase 3 (CDC25C), found in Bos taurus (Bovine).